The primary structure comprises 430 residues: Enolase (430 aa).

Gln-165 lines the (2R)-2-phosphoglycerate pocket. Glu-207 acts as the Proton donor in catalysis. Positions 244, 287, and 314 each coordinate Mg(2+). 4 residues coordinate (2R)-2-phosphoglycerate: Lys-339, Arg-368, Ser-369, and Lys-390. Lys-339 functions as the Proton acceptor in the catalytic mechanism.

Belongs to the enolase family. Component of the RNA degradosome, a multiprotein complex involved in RNA processing and mRNA degradation. The cofactor is Mg(2+).

It localises to the cytoplasm. The protein resides in the secreted. The protein localises to the cell surface. It carries out the reaction (2R)-2-phosphoglycerate = phosphoenolpyruvate + H2O. It participates in carbohydrate degradation; glycolysis; pyruvate from D-glyceraldehyde 3-phosphate: step 4/5. Catalyzes the reversible conversion of 2-phosphoglycerate (2-PG) into phosphoenolpyruvate (PEP). It is essential for the degradation of carbohydrates via glycolysis. The chain is Enolase from Stenotrophomonas maltophilia (strain K279a).